A 511-amino-acid chain; its full sequence is Peroxisomal N(1)-acetyl-spermine/spermidine oxidase (511 aa).

Residue Met-1 is modified to N-acetylmethionine. FAD is bound by residues Ala-24, Glu-45, Arg-53, and 69 to 70; that span reads HW. Substrate-binding residues include His-72 and Val-194. Residue Val-247 participates in FAD binding. Asn-320 contributes to the substrate binding site. FAD is bound by residues Glu-472 and 481-482; that span reads TT. The short motif at 509 to 511 is the Microbody targeting signal element; that stretch reads PRL.

The protein belongs to the flavin monoamine oxidase family. Monomer. FAD serves as cofactor. As to expression, widely expressed. Not detected in spleen. Expressed at lower level in neoplastic tissues.

The protein resides in the peroxisome. It is found in the cytoplasm. It catalyses the reaction N(1)-acetylspermine + O2 + H2O = 3-acetamidopropanal + spermidine + H2O2. It carries out the reaction N(1)-acetylspermidine + O2 + H2O = 3-acetamidopropanal + putrescine + H2O2. The catalysed reaction is N(1),N(12)-diacetylspermine + O2 + H2O = 3-acetamidopropanal + N(1)-acetylspermidine + H2O2. The protein operates within amine and polyamine metabolism; spermine metabolism. Its function is as follows. Flavoenzyme which catalyzes the oxidation of N(1)-acetylspermine to spermidine and is thus involved in the polyamine back-conversion. Can also oxidize N(1)-acetylspermidine to putrescine. Substrate specificity: N(1)-acetylspermine = N(1)-acetylspermidine &gt; N(1),N(12)-diacylspermine &gt;&gt; spermine. Does not oxidize spermidine. Plays an important role in the regulation of polyamine intracellular concentration and has the potential to act as a determinant of cellular sensitivity to the antitumor polyamine analogs. This chain is Peroxisomal N(1)-acetyl-spermine/spermidine oxidase (PAOX), found in Homo sapiens (Human).